A 497-amino-acid polypeptide reads, in one-letter code: Serine/threonine-protein phosphatase 2A 56 kDa regulatory subunit beta isoform (497 aa).

Residues 1–19 (METKLPPASTPTSPSSPGL) show a composition bias toward low complexity. 2 disordered regions span residues 1-55 (METK…YQSN) and 475-497 (TQGAKEAPLQRLTPQVAASGGQS). Residues serine 32, serine 35, serine 44, serine 46, serine 47, and serine 48 each carry the phosphoserine; by CLK2 modification. A compositionally biased stretch (basic residues) spans 34-45 (RSLRRARPRRSH).

It belongs to the phosphatase 2A regulatory subunit B56 family. As to quaternary structure, component of the serine/threonine-protein phosphatase 2A complex (PP2A). This complex consists of a common heterodimeric core enzyme, composed of a 36 kDa catalytic subunit (subunit C) and a 65 kDa constant scaffold subunit (PR65 or subunit A), that associates with a variety of regulatory subunits. Proteins that associate with the core dimer include three families of regulatory subunits B (the R2/B/PR55/B55, R3/B''/PR72/PR130/PR59 and R5/B'/B56 families), the 48 kDa variable regulatory subunit, viral proteins, and cell signaling molecules. Interacts with SGO1. Interacts with AKT1. Interacts with CUL3 and KLHL15; this interaction leads to proteasomal degradation. Post-translationally, ubiquitinated by E3 CUL3-KLHL15 complex; this modification leads to proteasomal degradation. Highest expression in brain.

The protein localises to the cytoplasm. Functionally, as the regulatory component of the serine/threonine-protein phosphatase 2A (PP2A) holoenzyme, modulates substrate specificity, subcellular localization, and responsiveness to phosphorylation. The phosphorylated form mediates the interaction between PP2A and AKT1, leading to AKT1 dephosphorylation. This chain is Serine/threonine-protein phosphatase 2A 56 kDa regulatory subunit beta isoform (PPP2R5B), found in Homo sapiens (Human).